A 945-amino-acid polypeptide reads, in one-letter code: Isoleucine--tRNA ligase (945 aa).

Positions 1 to 10 (MSNKKADSKP) are enriched in basic and acidic residues. The disordered stretch occupies residues 1 to 21 (MSNKKADSKPQAKYPVNLLDT). The 'HIGH' region signature appears at 66 to 76 (PYANGDIHLGH). Glu-581 is a binding site for L-isoleucyl-5'-AMP. Residues 622–626 (KMSKS) carry the 'KMSKS' region motif. Lys-625 is a binding site for ATP. 4 residues coordinate Zn(2+): Cys-908, Cys-911, Cys-928, and Cys-931.

This sequence belongs to the class-I aminoacyl-tRNA synthetase family. IleS type 1 subfamily. In terms of assembly, monomer. Zn(2+) is required as a cofactor.

The protein localises to the cytoplasm. The catalysed reaction is tRNA(Ile) + L-isoleucine + ATP = L-isoleucyl-tRNA(Ile) + AMP + diphosphate. Functionally, catalyzes the attachment of isoleucine to tRNA(Ile). As IleRS can inadvertently accommodate and process structurally similar amino acids such as valine, to avoid such errors it has two additional distinct tRNA(Ile)-dependent editing activities. One activity is designated as 'pretransfer' editing and involves the hydrolysis of activated Val-AMP. The other activity is designated 'posttransfer' editing and involves deacylation of mischarged Val-tRNA(Ile). This Burkholderia multivorans (strain ATCC 17616 / 249) protein is Isoleucine--tRNA ligase.